A 290-amino-acid chain; its full sequence is MKYRKLIILVLSILIILPVSTLDGHHIANADDDPPKKLKYKENSALALNYHRVRKANFLNNFIYFFSSSKEIKNYSVSQSQFESQIKWLKSHDAKFLTLKEFLYYKKKGKFPKRSVWINFDDMDETIYENAYPILKKYKIPATGFIITGHVGEENFHNLDMISKKELKEMYKTGLWEFETHTHDMHNLSKNNKSKLMKASEATIIKDLNKSEKYLTKNFKKSQKTIAYPYGLMNDDKLPVIKKAGLKYGFSLEEKAVTPNSNDYYIPRILISDDAFEHLIKRWDGFHEKD.

The first 28 residues, 1–28 (MKYRKLIILVLSILIILPVSTLDGHHIA), serve as a signal peptide directing secretion. The 177-residue stretch at 114–290 (RSVWINFDDM…KRWDGFHEKD (177 aa)) folds into the NodB homology domain.

Belongs to the polysaccharide deacetylase family.

It localises to the secreted. It is found in the cell wall. Catalyzes the N-deacetylation of poly-beta-1,6-N-acetyl-D-glucosamine (PNAG, also referred to as PIA), a biofilm adhesin polysaccharide. N-deacetylation is crucial for attachment of the polysaccharide to the bacterial cell surface; it leads to the introduction of positive charges in the otherwise neutral PIA polymer, allowing electrostatic interactions. The protein is Poly-beta-1,6-N-acetyl-D-glucosamine N-deacetylase (icaB) of Staphylococcus aureus (strain MRSA252).